A 418-amino-acid chain; its full sequence is IQ domain-containing protein C (418 aa).

The region spanning 6 to 35 (FLRKVSTLQAGFRGFLVRRQFQSLRAEYEA) is the IQ domain. Disordered stretches follow at residues 101–142 (QKKT…SVSK), 230–264 (HHAEDSSHKGRLKPQKHPDSVTSAGKTTAGSKGRE), 280–299 (SQAGGDRVTKGPDHGGQPFK), 327–355 (AETQLPTLSENQNIEDRYSRKPSRSAGPC), and 376–418 (GSLD…LQWR). 2 stretches are compositionally biased toward polar residues: residues 129 to 142 (KASQGNSQDTSVSK) and 249 to 259 (SVTSAGKTTAG). Residues 141–176 (SKMENADLGLSQSQQELQEQRNHLAMELLWLQQAIN) are a coiled coil. The segment covering 390-404 (PPSAGSSGHGNTSEL) has biased composition (polar residues).

This Mus musculus (Mouse) protein is IQ domain-containing protein C (Iqcc).